Reading from the N-terminus, the 312-residue chain is DNA-directed RNA polymerase subunit alpha (312 aa).

Residues 1 to 229 (MLQYQIDRIE…ELFQPLATVT (229 aa)) are alpha N-terminal domain (alpha-NTD). An alpha C-terminal domain (alpha-CTD) region spans residues 245–312 (QIPLEELNLS…ISIPQSRTSA (68 aa)).

The protein belongs to the RNA polymerase alpha chain family. In terms of assembly, in cyanobacteria the RNAP catalytic core is composed of 2 alpha, 1 beta, 1 beta', 1 gamma and 1 omega subunit. When a sigma factor is associated with the core the holoenzyme is formed, which can initiate transcription.

It carries out the reaction RNA(n) + a ribonucleoside 5'-triphosphate = RNA(n+1) + diphosphate. Its function is as follows. DNA-dependent RNA polymerase catalyzes the transcription of DNA into RNA using the four ribonucleoside triphosphates as substrates. This is DNA-directed RNA polymerase subunit alpha from Prochlorococcus marinus (strain MIT 9313).